The following is a 161-amino-acid chain: Nucleotide-binding protein AZOSEA28950 (161 aa).

This sequence belongs to the YajQ family.

Functionally, nucleotide-binding protein. This Aromatoleum aromaticum (strain DSM 19018 / LMG 30748 / EbN1) (Azoarcus sp. (strain EbN1)) protein is Nucleotide-binding protein AZOSEA28950.